The chain runs to 175 residues: Ribosome maturation factor RimM (175 aa).

The region spanning 100–173 is the PRC barrel domain; that stretch reads EGEYYFHEII…TIIIRPMEGL (74 aa).

This sequence belongs to the RimM family. Binds ribosomal protein uS19.

It localises to the cytoplasm. An accessory protein needed during the final step in the assembly of 30S ribosomal subunit, possibly for assembly of the head region. Essential for efficient processing of 16S rRNA. May be needed both before and after RbfA during the maturation of 16S rRNA. It has affinity for free ribosomal 30S subunits but not for 70S ribosomes. The sequence is that of Ribosome maturation factor RimM from Geobacillus kaustophilus (strain HTA426).